A 188-amino-acid chain; its full sequence is dCTP deaminase (188 aa).

Lys-109–Arg-114 lines the dCTP pocket. The active-site Proton donor/acceptor is Glu-135. Gln-154, Tyr-168, and Gln-178 together coordinate dCTP.

It belongs to the dCTP deaminase family. As to quaternary structure, homotrimer.

The catalysed reaction is dCTP + H2O + H(+) = dUTP + NH4(+). Its pathway is pyrimidine metabolism; dUMP biosynthesis; dUMP from dCTP (dUTP route): step 1/2. In terms of biological role, catalyzes the deamination of dCTP to dUTP. The chain is dCTP deaminase from Helicobacter pylori (strain P12).